The following is a 385-amino-acid chain: Calcium/calmodulin-dependent protein kinase type 1D (385 aa).

The 257-residue stretch at 23-279 (FEFKETLGTG…CEQAARHPWI (257 aa)) folds into the Protein kinase domain. ATP contacts are provided by residues 29–37 (LGTGAFSEV) and Lys52. Lys113 participates in a covalent cross-link: Glycyl lysine isopeptide (Lys-Gly) (interchain with G-Cter in SUMO2). Phosphoserine is present on Ser122. The active-site Proton acceptor is the Asp144. Phosphothreonine; by CaMKK1 and CaMKK2 is present on Thr180. The autoinhibitory domain stretch occupies residues 279 to 319 (IAGDTALSKNIHESVSAQIRKNFAKSKWRQAFNATAVVRHM). The calmodulin-binding stretch occupies residues 299-320 (KNFAKSKWRQAFNATAVVRHMR). Positions 318 to 324 (HMRRLQL) match the Nuclear export signal motif. The interval 363-385 (VAGVGAERRPRPTTVTTGHTGSK) is disordered. The span at 375–385 (TTVTTGHTGSK) shows a compositional bias: polar residues.

This sequence belongs to the protein kinase superfamily. CAMK Ser/Thr protein kinase family. CaMK subfamily. Expressed ubiquitously with high levels in brain and low levels in kidney. Isoform 2 is highly expressed in brain compared to other tissues. In hematopoietic cell lines predominant expression was detected in T and EC cells.

Its subcellular location is the cytoplasm. The protein resides in the nucleus. The catalysed reaction is L-seryl-[protein] + ATP = O-phospho-L-seryl-[protein] + ADP + H(+). The enzyme catalyses L-threonyl-[protein] + ATP = O-phospho-L-threonyl-[protein] + ADP + H(+). Its activity is regulated as follows. Activated by Ca(2+)/calmodulin. Binding of calmodulin results in conformational change that relieves intrasteric autoinhibition and allows phosphorylation of Thr-180 within the activation loop by CaMKK1 or CaMKK2. Phosphorylation of Thr-180 results in several fold increase in total activity. Unlike CaMK4, may be unable to exhibit autonomous activity after Ca(2+)/calmodulin activation. Calcium/calmodulin-dependent protein kinase that operates in the calcium-triggered CaMKK-CaMK1 signaling cascade and, upon calcium influx, activates CREB-dependent gene transcription, regulates calcium-mediated granulocyte function and respiratory burst and promotes basal dendritic growth of hippocampal neurons. In neutrophil cells, required for cytokine-induced proliferative responses and activation of the respiratory burst. Activates the transcription factor CREB1 in hippocampal neuron nuclei. May play a role in apoptosis of erythroleukemia cells. In vitro, phosphorylates transcription factor CREM isoform Beta. Isoform 1 but not isoform 2 activates CREB1. This is Calcium/calmodulin-dependent protein kinase type 1D (Camk1d) from Mus musculus (Mouse).